The primary structure comprises 346 residues: Phenylalanine--tRNA ligase alpha subunit (346 aa).

Mg(2+) is bound at residue Glu261.

The protein belongs to the class-II aminoacyl-tRNA synthetase family. Phe-tRNA synthetase alpha subunit type 1 subfamily. Tetramer of two alpha and two beta subunits. Mg(2+) is required as a cofactor.

It is found in the cytoplasm. The catalysed reaction is tRNA(Phe) + L-phenylalanine + ATP = L-phenylalanyl-tRNA(Phe) + AMP + diphosphate + H(+). The sequence is that of Phenylalanine--tRNA ligase alpha subunit from Streptococcus agalactiae serotype III (strain NEM316).